The following is a 216-amino-acid chain: Thiopurine S-methyltransferase (216 aa).

S-adenosyl-L-methionine-binding residues include tryptophan 10, leucine 45, glutamate 66, and arginine 123.

The protein belongs to the class I-like SAM-binding methyltransferase superfamily. TPMT family.

The protein localises to the cytoplasm. It carries out the reaction S-adenosyl-L-methionine + a thiopurine = S-adenosyl-L-homocysteine + a thiopurine S-methylether.. The chain is Thiopurine S-methyltransferase from Pseudomonas putida (strain ATCC 47054 / DSM 6125 / CFBP 8728 / NCIMB 11950 / KT2440).